The sequence spans 108 residues: Ig kappa chain V-V region NQ5-89.4 (108 aa).

The segment at 1–23 (DIQMTQTTSSLSASLGHRVTITC) is framework-1. Cys-23 and Cys-88 are joined by a disulfide. The complementarity-determining-1 stretch occupies residues 24–34 (SASQDISNYLN). Residues 35–49 (WYQQKPDGTVKLLIY) form a framework-2 region. The segment at 50–56 (YTSRLHS) is complementarity-determining-2. The segment at 57–88 (GVPSRFSGSGSATDYSLTITNLQQEDXATYXC) is framework-3. Residues 89-97 (QQGNTLPYT) are complementarity-determining-3. A framework-4 region spans residues 98–107 (FGGGTKLXIK).

Functionally, anti-2-phenyl oxazolone (PHOX) Antibody. This Mus musculus (Mouse) protein is Ig kappa chain V-V region NQ5-89.4.